A 671-amino-acid polypeptide reads, in one-letter code: MQGQKRRVRTCHSCYTRKQKASESDSICDRQYPCNHCTRRRRPEECVYGPPPVKVPSCPPVPADQSETQPRPVESARPTRETPVDDSEAHWSREHSALARSFGYFEDSNSNTMALLRRLELPDQSDTELKNAWPSTWETIHHELDLMPERQIIDFLVQYFVYELNWMKQVIHVPSFLANYQLWWAKDKIVEIADVEFAALIARICSYATQFLPSPSHTVDQIRGRSLADIRDTCSNIGNKLATACETLDWKGTLVRVQHIIFAALKVSCEGRTSQFWEGIGSACRAAQKAGIHTDTTGLESQLAKDSAQELERDVQRRTFCSLYVLDSHLSRQLDRIPFLSNHLIEETLPRLRLIPDIGNIPTETATRAPDIFTERLMQVQLGLFWRGLGLQRTCEFDPTESERIYEKFNSEYLNNLHPAFAIAHPDTTLDKALPKLPMQRQLLYIAIFDSICWNFRPLLLLKPDQVASLAPYKKVLLRSQKRRLGMAALKVLEAVAALHTMFGGSYTRFSAIIFNSFEPAILLLNLCSHADFPFDQDDNSTSLVGTKVRMTYRIAMQAVEQAIHRLQMLADLSDMAASGARVATLLFARSVQPKQSSSPPALTLSVSGSLGPSQFPTPIERYGEQENWPSLEAGDPYSMPDNFPSMAQDSFPSPQLSSLKFPVVWGEAFF.

Positions 11 to 46 (CHSCYTRKQKASESDSICDRQYPCNHCTRRRRPEEC) form a DNA-binding region, zn(2)-C6 fungal-type. Residues 48–90 (YGPPPVKVPSCPPVPADQSETQPRPVESARPTRETPVDDSEAH) form a disordered region. Pro residues predominate over residues 49–62 (GPPPVKVPSCPPVP). Positions 77 to 90 (RPTRETPVDDSEAH) are enriched in basic and acidic residues. Positions 148 to 593 (PERQIIDFLV…ATLLFARSVQ (446 aa)) are fungal transcription factor domain. The tract at residues 629 to 650 (WPSLEAGDPYSMPDNFPSMAQD) is disordered.

Its subcellular location is the nucleus. In terms of biological role, transcription factor; part of the gene cluster that mediates the biosynthesis of the 6-methyl-2-pyrone derivative xylariolide D. May play a role in the regulation of the expression of the highly reducing polyketide synthase xilA and the cytochroe P450 monooxygenase xilC. The protein is Transcription factor xilB of Penicillium rubens (strain ATCC 28089 / DSM 1075 / NRRL 1951 / Wisconsin 54-1255) (Penicillium chrysogenum).